A 379-amino-acid polypeptide reads, in one-letter code: MHACEGSAAGRRAFDSICPNRMLDLSRRSLGKPGKPERKFVPPWKSFPGCGGGSPVSVYEDPLDAEPAPLPALTTIDLQDLADCTSLLGTEAPPSGDSPASQNPSLQTEADFNLQNFRDAVDDLIADSSSLTSPPLTDGDFPFSPCDVPSFGSCLSPSLDPPALGSPHLPPPPTEQYWKEVADQNQRALGTALIENNQLHVTLTQKQEEIASLRERNVQLKELACRTRHLASVLDKLMITQSPAEPFQLKATTKRSLEELFSATGQAGQGCAEVDAILRDISQRCEEALQNRDPKRPRLQQEPDSKDCSTRNLHGVFRGLRTDCGASSVNLSHSELEEGGSFSTPIRSHSTIRTLAFPQGKAFTIRTVTGGYKFRWVPS.

Disordered stretches follow at residues 26-46 (SRRS…PWKS) and 87-106 (LLGT…NPSL). Residues 175-223 (EQYWKEVADQNQRALGTALIENNQLHVTLTQKQEEIASLRERNVQLKEL) adopt a coiled-coil conformation. Basic and acidic residues predominate over residues 289–309 (LQNRDPKRPRLQQEPDSKDCS). Positions 289-311 (LQNRDPKRPRLQQEPDSKDCSTR) are disordered.

It belongs to the geminin family. In terms of assembly, heterodimer (via coiled-coil domain) with GMNN (via coiled-coil domain); targets GMNN to the nucleus. Can form homodimers (in vitro, via coiled-coil domain), but these are much less stable than the heterodimer formed with GMNN.

It is found in the nucleus. Functionally, transcription regulator specifically required for multiciliate cell differentiation. Acts in a multiprotein complex containing E2F4 and E2F5 that binds and activates genes required for centriole biogenesis. Required for the deuterosome-mediated acentriolar pathway. Plays a role in mitotic cell cycle progression by promoting cell cycle exit. Modulates GMNN activity by reducing its affinity for CDT1. The protein is Multicilin (Mcidas) of Rattus norvegicus (Rat).